A 354-amino-acid chain; its full sequence is Uroporphyrinogen decarboxylase (354 aa).

Substrate is bound by residues 27-31 (RQAGR), Asp77, Tyr154, Thr209, and His327.

The protein belongs to the uroporphyrinogen decarboxylase family. Homodimer.

It is found in the cytoplasm. It carries out the reaction uroporphyrinogen III + 4 H(+) = coproporphyrinogen III + 4 CO2. It functions in the pathway porphyrin-containing compound metabolism; protoporphyrin-IX biosynthesis; coproporphyrinogen-III from 5-aminolevulinate: step 4/4. In terms of biological role, catalyzes the decarboxylation of four acetate groups of uroporphyrinogen-III to yield coproporphyrinogen-III. In Salmonella agona (strain SL483), this protein is Uroporphyrinogen decarboxylase.